The primary structure comprises 168 residues: MTRKKRRLYMLGLALLGLGTATALTLSAFEENIVFFYSPSDLVVQPPGDRSVRLGGLVEDGSVQKQADGLTITFRVTDTANTVPVTYKGIVPDLFREGQGVVAEGRMGGDGVFVAREVLARHDENYMPPEVHDALQRAGAVKTEVPGRSIYTPADSDDKVHATTTLKP.

At 1 to 7 (MTRKKRR) the chain is on the cytoplasmic side. The helical; Signal-anchor for type II membrane protein transmembrane segment at 8 to 28 (LYMLGLALLGLGTATALTLSA) threads the bilayer. Residues 29 to 168 (FEENIVFFYS…KVHATTTLKP (140 aa)) are Periplasmic-facing. The heme site is built by H122 and Y126. Positions 149–168 (SIYTPADSDDKVHATTTLKP) are disordered.

This sequence belongs to the CcmE/CycJ family.

Its subcellular location is the cell inner membrane. Heme chaperone required for the biogenesis of c-type cytochromes. Transiently binds heme delivered by CcmC and transfers the heme to apo-cytochromes in a process facilitated by CcmF and CcmH. The polypeptide is Cytochrome c-type biogenesis protein CcmE (Rhodospirillum centenum (strain ATCC 51521 / SW)).